Here is a 115-residue protein sequence, read N- to C-terminus: Kunitz-type trypsin inhibitor 1 (115 aa).

Belongs to the protease inhibitor I3 (leguminous Kunitz-type inhibitor) family.

In terms of biological role, exhibits Kunitz trypsin protease inhibitor activity. The chain is Kunitz-type trypsin inhibitor 1 from Selenicereus undatus (Pitahaya).